The following is a 380-amino-acid chain: Cytochrome b (380 aa).

4 consecutive transmembrane segments (helical) span residues 34-54 (FGSLLGICLTTQILTGLLLAM), 78-99 (WLIRNIHANGASFFFICIYLHI), 114-134 (WNTGILLLLTLMATAFVGYVL), and 179-199 (FFALHFLLPFMIAGLTLIHLT). Heme b contacts are provided by histidine 84 and histidine 98. Residues histidine 183 and histidine 197 each contribute to the heme b site. A ubiquinone is bound at residue histidine 202. 4 consecutive transmembrane segments (helical) span residues 227 to 247 (LKDTLGFMLMLLPLTTLALFS), 289 to 309 (LGGVLALAASVLILFLSPLLH), 321 to 341 (LSQLLFWILIANLFILTWVGS), and 348 to 368 (FIIIGQLASLTYFTILLILLP).

This sequence belongs to the cytochrome b family. As to quaternary structure, the cytochrome bc1 complex contains 11 subunits: 3 respiratory subunits (MT-CYB, CYC1 and UQCRFS1), 2 core proteins (UQCRC1 and UQCRC2) and 6 low-molecular weight proteins (UQCRH/QCR6, UQCRB/QCR7, UQCRQ/QCR8, UQCR10/QCR9, UQCR11/QCR10 and a cleavage product of UQCRFS1). This cytochrome bc1 complex then forms a dimer. The cofactor is heme b.

Its subcellular location is the mitochondrion inner membrane. Functionally, component of the ubiquinol-cytochrome c reductase complex (complex III or cytochrome b-c1 complex) that is part of the mitochondrial respiratory chain. The b-c1 complex mediates electron transfer from ubiquinol to cytochrome c. Contributes to the generation of a proton gradient across the mitochondrial membrane that is then used for ATP synthesis. The sequence is that of Cytochrome b (MT-CYB) from Fregetta tropica (Black-bellied storm-petrel).